The following is a 491-amino-acid chain: Protein translocase subunit SecY (491 aa).

The Cytoplasmic portion of the chain corresponds to 1–20 (MGWKEAAAPVLTRMPAVERP). The chain crosses the membrane as a helical span at residues 21–47 (EGHVPFRRKMYWTGGVLVLYFFLTNVP). Over 48–58 (LWGIQTAGNDF) the chain is Extracellular. The helical intramembrane region spans 59 to 66 (FGQFRSLL). A discontinuously helical membrane pass occupies residues 59-87 (FGQFRSLLAGGQGTVLQLGIGPIVTASIV). An intramembrane segment occupies 67–78 (AGGQGTVLQLGI). An intramembrane region (helical) is located at residues 79–87 (GPIVTASIV). At 88-109 (LQLLGGANLLGLDTDNDPRDQA) the chain is on the cytoplasmic side. A helical membrane pass occupies residues 110–134 (IYQGLQKFLVGVMVVLTGAPMVFLG). The Extracellular portion of the chain corresponds to 135 to 152 (NFLQPSQQLAQSMPGGAF). Residues 153-177 (GVEVLIFAQIAAGGILLLFMDEVIS) traverse the membrane as a helical segment. Over 178-183 (KWGVGS) the chain is Cytoplasmic. Residues 184–202 (GIGLFIVAGVSQSLVGGLV) form a helical membrane-spanning segment. The Extracellular portion of the chain corresponds to 203–244 (FWEGGVGSQGLLPTWFDIIVGNVSNMPPLLSGSGIEFLLMQA). A helical transmembrane segment spans residues 245–266 (GILGLLTTLFIYVVVVYAESVR). The Cytoplasmic segment spans residues 267 to 291 (VEIPLSHARVKGARGRFPVKLIYAS). A helical membrane pass occupies residues 292–313 (VLPMILVRALQANIQFLGQILN). The Extracellular segment spans residues 314-365 (STLASMPTWLGVYGGNGQVTGGLFYYLAPIYSPNAWMWWTSGATAARWQVLI). A helical membrane pass occupies residues 366-385 (RIAIDLSFMIIGGAIFAIFW). The Cytoplasmic portion of the chain corresponds to 386–428 (VETADMGPDATARQIQNSGMQIPGFRKNQGVIEKVMERYIPQV). The chain crosses the membrane as a helical span at residues 429-447 (TVIGGALVGLLAVMANMLG). Residues 448–452 (TIGNV) are Extracellular-facing. The helical transmembrane segment at 453–467 (SGTGLLLTISITYKL) threads the bilayer. Over 468–491 (YEEIAEEQMMEMHPMMREMFGGGD) the chain is Cytoplasmic.

It belongs to the SecY/SEC61-alpha family. Component of the Sec protein translocase complex. Heterotrimer consisting of alpha (SecY), beta (SecG) and gamma (SecE) subunits. The heterotrimers can form oligomers, although 1 heterotrimer is thought to be able to translocate proteins. Interacts with the ribosome. May interact with SecDF, and other proteins may be involved.

Its subcellular location is the cell membrane. Functionally, the central subunit of the protein translocation channel SecYEG. Consists of two halves formed by TMs 1-5 and 6-10. These two domains form a lateral gate at the front which open onto the bilayer between TMs 2 and 7, and are clamped together by SecE at the back. The channel is closed by both a pore ring composed of hydrophobic SecY resides and a short helix (helix 2A) on the extracellular side of the membrane which forms a plug. The plug probably moves laterally to allow the channel to open. The ring and the pore may move independently. The sequence is that of Protein translocase subunit SecY from Halobacterium salinarum (strain ATCC 700922 / JCM 11081 / NRC-1) (Halobacterium halobium).